The chain runs to 76 residues: Cytochrome c oxidase subunit 6C-2 (76 aa).

Residues 4–14 are Mitochondrial matrix-facing; it reads GALLPKPQMRG. Residues 15–55 traverse the membrane as a helical segment; that stretch reads LLAKRLRVHIVGAFVVALGVAAAYKFGVAEPRKKAYADFYR. Topologically, residues 56–76 are mitochondrial intermembrane; that stretch reads NYDSMKDFEEMRQAGVFQSAK. Serine 74 carries the phosphoserine modification.

It belongs to the cytochrome c oxidase subunit 6c family. In terms of assembly, component of the cytochrome c oxidase (complex IV, CIV), a multisubunit enzyme composed of 14 subunits. The complex is composed of a catalytic core of 3 subunits MT-CO1, MT-CO2 and MT-CO3, encoded in the mitochondrial DNA, and 11 supernumerary subunits COX4I, COX5A, COX5B, COX6A, COX6B, COX6C, COX7A, COX7B, COX7C, COX8 and NDUFA4, which are encoded in the nuclear genome. The complex exists as a monomer or a dimer and forms supercomplexes (SCs) in the inner mitochondrial membrane with NADH-ubiquinone oxidoreductase (complex I, CI) and ubiquinol-cytochrome c oxidoreductase (cytochrome b-c1 complex, complex III, CIII), resulting in different assemblies (supercomplex SCI(1)III(2)IV(1) and megacomplex MCI(2)III(2)IV(2)).

The protein localises to the mitochondrion inner membrane. It participates in energy metabolism; oxidative phosphorylation. Functionally, component of the cytochrome c oxidase, the last enzyme in the mitochondrial electron transport chain which drives oxidative phosphorylation. The respiratory chain contains 3 multisubunit complexes succinate dehydrogenase (complex II, CII), ubiquinol-cytochrome c oxidoreductase (cytochrome b-c1 complex, complex III, CIII) and cytochrome c oxidase (complex IV, CIV), that cooperate to transfer electrons derived from NADH and succinate to molecular oxygen, creating an electrochemical gradient over the inner membrane that drives transmembrane transport and the ATP synthase. Cytochrome c oxidase is the component of the respiratory chain that catalyzes the reduction of oxygen to water. Electrons originating from reduced cytochrome c in the intermembrane space (IMS) are transferred via the dinuclear copper A center (CU(A)) of subunit 2 and heme A of subunit 1 to the active site in subunit 1, a binuclear center (BNC) formed by heme A3 and copper B (CU(B)). The BNC reduces molecular oxygen to 2 water molecules using 4 electrons from cytochrome c in the IMS and 4 protons from the mitochondrial matrix. The polypeptide is Cytochrome c oxidase subunit 6C-2 (Cox6c2) (Rattus norvegicus (Rat)).